The sequence spans 66 residues: Potassium channel toxin alpha-KTx (66 aa).

The N-terminal stretch at 1 to 21 (MNTKVVLIMLMITSVILVVEA) is a signal peptide. Disulfide bonds link Cys29/Cys49, Cys35/Cys59, Cys39/Cys61, and Cys44/Cys64.

Belongs to the short scorpion toxin superfamily. Potassium channel inhibitor family. As to expression, expressed by the venom gland.

Its subcellular location is the secreted. Functionally, blocks voltage-gated potassium channels. This Hoffmannihadrurus gertschi (Scorpion) protein is Potassium channel toxin alpha-KTx.